Here is a 510-residue protein sequence, read N- to C-terminus: AAA-ATPase At3g28540 (510 aa).

Residues 7–25 (LFGFTGTTMASLMFFWSVY) traverse the membrane as a helical segment. 246–253 (GPPGTGKS) serves as a coordination point for ATP. A disordered region spans residues 460–510 (KEKAKKLAEEEKMKKAARDARRIKKKAEEEHKKKNKVEENGDVSHDNGNHI).

It belongs to the AAA ATPase family. BCS1 subfamily. It depends on Mg(2+) as a cofactor.

Its subcellular location is the membrane. The catalysed reaction is ATP + H2O = ADP + phosphate + H(+). The chain is AAA-ATPase At3g28540 from Arabidopsis thaliana (Mouse-ear cress).